Here is a 214-residue protein sequence, read N- to C-terminus: Oocyte zinc finger protein XlCOF10 (214 aa).

7 consecutive C2H2-type zinc fingers follow at residues 1–23 (FSCS…RQLH), 29–51 (FTCS…HRIH), 57–79 (FTCD…QKSH), 85–107 (FCCS…QRTH), 113–135 (FTCT…QKSH), 141–163 (FSCS…QRIH), and 169–191 (FSCS…EKCH).

This sequence belongs to the krueppel C2H2-type zinc-finger protein family.

Its subcellular location is the nucleus. Functionally, may be involved in transcriptional regulation. The polypeptide is Oocyte zinc finger protein XlCOF10 (Xenopus laevis (African clawed frog)).